The following is a 680-amino-acid chain: Leucine-rich repeat and calponin homology domain-containing protein 4 (680 aa).

Low complexity predominate over residues 1–22 (MAAAVAGPLAAGGEEAAASVSL). A disordered region spans residues 1–35 (MAAAVAGPLAAGGEEAAASVSLPGSPGLPGSRSAE). LRR repeat units lie at residues 41-64 (AVATGTLNLSNRRLKHFPRGAARS), 67-90 (LSDITQADLSRNRFPEVPEAACQL), 92-113 (SLEGLSLYHNCLKCLNPALGNL), 114-136 (TALTYLNLSRNQLSSLPPYICQL), 138-158 (LRVLIISNNKLGALPPDISTL), 159-181 (GSLRQLDVSSNELQSLPVELCSL), 182-204 (RSLRDLNVRRNQLSTLPDELGDL), 206-226 (LVRLDFSCNRISRIPVSFCRL), and 227-250 (RHLQVVLLDSNPLQSPPAQICLKG). Residues S279, S281, S304, S307, S309, and S313 each carry the phosphoserine modification. The segment at 329 to 528 (SELARDPRGP…PSSPESVLRP (200 aa)) is disordered. Basic and acidic residues predominate over residues 330–345 (ELARDPRGPRQPREDG). Acidic residues predominate over residues 346–355 (AGDGDLEQID). Basic and acidic residues-rich tracts occupy residues 357 to 371 (IDSHVPGEDEDRSAA) and 385 to 418 (DVEKPSSSRREEPAGEERRRPDTLQLWQERERKQ). A Phosphoserine modification is found at S432. Low complexity-rich tracts occupy residues 440-453 (AAGAGASAPSTQAT) and 510-528 (RSSSQSGSSPSSPESVLRP). 5 positions are modified to phosphoserine: S511, S513, S517, S521, and S586. The 114-residue stretch at 531-644 (FPQEKELISQ…VLEAVILVGG (114 aa)) folds into the Calponin-homology (CH) domain. The helical transmembrane segment at 655 to 675 (GLGGFLLFYVVFMLLLYVVYT) threads the bilayer.

As to expression, widely expressed across tissues, with the most abundant expression in spleen, testes, thymus, intestine, and blood. Expressed in macrophages.

It is found in the cell membrane. Its function is as follows. Accessory protein that regulates signaling by multiple TLRs, acting as a broad-spanning regulator of the innate immune response. In macrophages, binds LPS and promotes proper docking of LPS in lipid raft membrane. May be required for lipid raft maintenance. The protein is Leucine-rich repeat and calponin homology domain-containing protein 4 (Lrch4) of Mus musculus (Mouse).